The following is a 146-amino-acid chain: Negative cofactor 2 complex subunit beta (146 aa).

The disordered stretch occupies residues 124 to 146 (FRQSRSRLHHNSVSDPVKSEDSS). Ser135, Ser137, and Ser142 each carry phosphoserine.

In terms of assembly, component of the NC2 (negative cofactor 2) complex composed of BUR6 and NCB2. The NC2 complex associates with SPT15/TBP. Interacts with SPT15/TBP.

It localises to the nucleus. Its function is as follows. Component of the NC2 complex which represses RNA polymerase II transcription through binding to SPT15/TBP and thereby inhibiting the assembly of the preinitiation complex. The NC2 complex may also mediate transcriptional activation from TATA-driven promoters through association with SPT15/TBP. The chain is Negative cofactor 2 complex subunit beta (NCB2) from Saccharomyces cerevisiae (strain ATCC 204508 / S288c) (Baker's yeast).